We begin with the raw amino-acid sequence, 1051 residues long: Carbamoyl phosphate synthase large chain (1051 aa).

Positions 1–399 (MKETPKKVLV…SLQKAVRMLD (399 aa)) are carboxyphosphate synthetic domain. Residues R127, R167, G173, G174, K206, L208, E213, G239, V240, H241, Q282, and E296 each contribute to the ATP site. Residues 131–325 (RETMIENNLP…LAYVSAKLAL (195 aa)) form the ATP-grasp 1 domain. The Mg(2+) site is built by Q282, E296, and N298. Positions 282, 296, and 298 each coordinate Mn(2+). The oligomerization domain stretch occupies residues 400 to 548 (IGEPGVVGGK…LTYNGTEDDL (149 aa)). The interval 549-930 (EFSQGNKLLI…LKSWLSSIPN (382 aa)) is carbamoyl phosphate synthetic domain. In terms of domain architecture, ATP-grasp 2 spans 673–863 (SKLLDKLGIS…LINEAMKAIF (191 aa)). Residues R709, K748, I750, E755, G779, V780, H781, S782, Q822, and E834 each contribute to the ATP site. Residues Q822, E834, and N836 each contribute to the Mg(2+) site. Residues Q822, E834, and N836 each contribute to the Mn(2+) site. The MGS-like domain maps to 930 to 1051 (NRIPNKNGIA…FEISEYGGGI (122 aa)). The interval 931–1051 (RIPNKNGIAL…FEISEYGGGI (121 aa)) is allosteric domain.

It belongs to the CarB family. In terms of assembly, composed of two chains; the small (or glutamine) chain promotes the hydrolysis of glutamine to ammonia, which is used by the large (or ammonia) chain to synthesize carbamoyl phosphate. Tetramer of heterodimers (alpha,beta)4. Mg(2+) serves as cofactor. The cofactor is Mn(2+).

It carries out the reaction hydrogencarbonate + L-glutamine + 2 ATP + H2O = carbamoyl phosphate + L-glutamate + 2 ADP + phosphate + 2 H(+). The enzyme catalyses hydrogencarbonate + NH4(+) + 2 ATP = carbamoyl phosphate + 2 ADP + phosphate + 2 H(+). The protein operates within amino-acid biosynthesis; L-arginine biosynthesis; carbamoyl phosphate from bicarbonate: step 1/1. It participates in pyrimidine metabolism; UMP biosynthesis via de novo pathway; (S)-dihydroorotate from bicarbonate: step 1/3. Large subunit of the glutamine-dependent carbamoyl phosphate synthetase (CPSase). CPSase catalyzes the formation of carbamoyl phosphate from the ammonia moiety of glutamine, carbonate, and phosphate donated by ATP, constituting the first step of 2 biosynthetic pathways, one leading to arginine and/or urea and the other to pyrimidine nucleotides. The large subunit (synthetase) binds the substrates ammonia (free or transferred from glutamine from the small subunit), hydrogencarbonate and ATP and carries out an ATP-coupled ligase reaction, activating hydrogencarbonate by forming carboxy phosphate which reacts with ammonia to form carbamoyl phosphate. This chain is Carbamoyl phosphate synthase large chain, found in Saccharolobus islandicus (strain L.S.2.15 / Lassen #1) (Sulfolobus islandicus).